We begin with the raw amino-acid sequence, 306 residues long: Ornithine carbamoyltransferase (306 aa).

Carbamoyl phosphate contacts are provided by residues 51–54 (STRT), Q78, R102, and 129–132 (HPVQ). Residues N157, D221, and 225-226 (SM) each bind L-ornithine. Carbamoyl phosphate contacts are provided by residues 261–262 (CL) and R289.

This sequence belongs to the aspartate/ornithine carbamoyltransferase superfamily. OTCase family.

It localises to the cytoplasm. The enzyme catalyses carbamoyl phosphate + L-ornithine = L-citrulline + phosphate + H(+). The protein operates within amino-acid biosynthesis; L-arginine biosynthesis; L-arginine from L-ornithine and carbamoyl phosphate: step 1/3. Its function is as follows. Reversibly catalyzes the transfer of the carbamoyl group from carbamoyl phosphate (CP) to the N(epsilon) atom of ornithine (ORN) to produce L-citrulline. This chain is Ornithine carbamoyltransferase, found in Campylobacter hominis (strain ATCC BAA-381 / DSM 21671 / CCUG 45161 / LMG 19568 / NCTC 13146 / CH001A).